The sequence spans 122 residues: Small ribosomal subunit protein uS13 (122 aa).

The interval 96–122 (LPVHGQRTKTNARTRKGPARTVAGKKK) is disordered.

This sequence belongs to the universal ribosomal protein uS13 family. As to quaternary structure, part of the 30S ribosomal subunit. Forms a loose heterodimer with protein S19. Forms two bridges to the 50S subunit in the 70S ribosome.

Its function is as follows. Located at the top of the head of the 30S subunit, it contacts several helices of the 16S rRNA. In the 70S ribosome it contacts the 23S rRNA (bridge B1a) and protein L5 of the 50S subunit (bridge B1b), connecting the 2 subunits; these bridges are implicated in subunit movement. Contacts the tRNAs in the A and P-sites. This chain is Small ribosomal subunit protein uS13, found in Geotalea daltonii (strain DSM 22248 / JCM 15807 / FRC-32) (Geobacter daltonii).